The chain runs to 686 residues: ATP-dependent zinc metalloprotease FTSH 1, chloroplastic (686 aa).

Residues 1–16 (MAPPCSISSASHLLIT) constitute a chloroplast transit peptide. The helical transmembrane segment at 173-193 (FLAFVGNLLFPFLAFAGLFFL) threads the bilayer. 272-279 (GPPGTGKT) contacts ATP. Histidine 494 is a Zn(2+) binding site. Glutamate 495 is a catalytic residue. Zn(2+)-binding residues include histidine 498 and aspartate 575.

It in the N-terminal section; belongs to the AAA ATPase family. This sequence in the C-terminal section; belongs to the peptidase M41 family. The cofactor is Zn(2+).

It is found in the plastid. The protein localises to the chloroplast thylakoid membrane. Probable ATP-dependent zinc metallopeptidase. The protein is ATP-dependent zinc metalloprotease FTSH 1, chloroplastic (FTSH1) of Oryza sativa subsp. japonica (Rice).